A 122-amino-acid chain; its full sequence is Urease subunit beta (122 aa).

Belongs to the urease beta subunit family. Heterotrimer of UreA (gamma), UreB (beta) and UreC (alpha) subunits. Three heterotrimers associate to form the active enzyme.

The protein localises to the cytoplasm. The catalysed reaction is urea + 2 H2O + H(+) = hydrogencarbonate + 2 NH4(+). Its pathway is nitrogen metabolism; urea degradation; CO(2) and NH(3) from urea (urease route): step 1/1. This chain is Urease subunit beta, found in Flavobacterium johnsoniae (strain ATCC 17061 / DSM 2064 / JCM 8514 / BCRC 14874 / CCUG 350202 / NBRC 14942 / NCIMB 11054 / UW101) (Cytophaga johnsonae).